An 841-amino-acid polypeptide reads, in one-letter code: DNA ligase (841 aa).

NAD(+) is bound by residues 33–37 (DAQYD), 82–83 (SL), and E114. K116 (N6-AMP-lysine intermediate) is an active-site residue. NAD(+) is bound by residues R137, E174, K300, and K324. Zn(2+) is bound by residues C418, C421, C436, and C442. A BRCT domain is found at 758–841 (EKTGPLDGQT…AFLGEHGQQR (84 aa)).

This sequence belongs to the NAD-dependent DNA ligase family. LigA subfamily. Requires Mg(2+) as cofactor. Mn(2+) is required as a cofactor.

It catalyses the reaction NAD(+) + (deoxyribonucleotide)n-3'-hydroxyl + 5'-phospho-(deoxyribonucleotide)m = (deoxyribonucleotide)n+m + AMP + beta-nicotinamide D-nucleotide.. DNA ligase that catalyzes the formation of phosphodiester linkages between 5'-phosphoryl and 3'-hydroxyl groups in double-stranded DNA using NAD as a coenzyme and as the energy source for the reaction. It is essential for DNA replication and repair of damaged DNA. The protein is DNA ligase of Xanthomonas oryzae pv. oryzae (strain KACC10331 / KXO85).